A 382-amino-acid polypeptide reads, in one-letter code: O-methyltransferase okaF (382 aa).

The S-adenosyl-L-methionine site is built by glutamate 249 and arginine 287. Catalysis depends on histidine 291, which acts as the Proton acceptor.

The protein belongs to the class I-like SAM-binding methyltransferase superfamily. Cation-independent O-methyltransferase family.

The enzyme catalyses 3-desmethyl okaramine B + S-adenosyl-L-methionine = okaramine B + S-adenosyl-L-homocysteine + H(+). It functions in the pathway alkaloid biosynthesis. Functionally, O-methyltransferase; part of the gene cluster that mediates the biosynthesis of okaramine B, a prenylated indole alkaloid that possesses an unusual octacyclic ring system, including a four-membered azetidine ring and an eight-membered azocine ring, and that exhibits insecticidal activity against silkworm larvae. Within the pathway, okaF catalyzes the last step which is the methylation of 3-desmethyl okaramine B to produce okaramine B. With okaG, OkaF is also able to produce okaramine D from okaramine E. The biosynthesis begins with the NRPS okaA that condenses two tryptophan molecules into cyclo(L-Trp-L-Trp). Prenylation by the prenyltransferase okaC then leads to the formation of cyclo(N8-(alpha,alpha-dimethylallyl)-L-Trp-6a-(alpha,alpha-dime-thylallyl)-L-Trp). This is followed by indole 2,3-epoxidation by the FAD-dependent monooxygenase okaB to facilitate the formation of the hexahydropyrrolo[2,3-b]indole (HPI) moiety of okaramine C. The cytochrome P450 monooxygenase okaD then likely catalyzes formation of the eight-membered ring of okaramine A. The dioxygenase okaE further forms the unusual 2-dimethyl-3-methyl-azetidine ring to yield 12-deshydroxyl okaramine E, as well as the hydroxylation of 12-deshydroxyl okaramine E to produce okaramine E. The cytochrome P450 monoxygenase okaG converts 12-deshydroxyl okaramine E into 3-desmethyl okaramine B which is further methylated by the methyltransferase okaF into okaramine B. In a shunt pathway, okaG and okaF together are also able to convert okaramine E into okaramine D. Okaramine H is produced by nonenzymatic conversion from okaramine A. The sequence is that of O-methyltransferase okaF from Penicillium ochrochloron.